The primary structure comprises 468 residues: RUS family member 1 (468 aa).

Ala-2 is subject to N-acetylalanine. A Phosphothreonine modification is found at Thr-49. Residues 247-267 (LLMLPLVSGCPGFSLGCFFFL) form a helical membrane-spanning segment.

This sequence belongs to the RUS1 family.

The protein resides in the membrane. The protein is RUS family member 1 (Rusf1) of Pongo abelii (Sumatran orangutan).